Consider the following 306-residue polypeptide: Recombination-associated protein RdgC (306 aa).

The protein belongs to the RdgC family.

Its subcellular location is the cytoplasm. The protein resides in the nucleoid. Functionally, may be involved in recombination. This is Recombination-associated protein RdgC from Pseudomonas syringae pv. tomato (strain ATCC BAA-871 / DC3000).